Here is a 195-residue protein sequence, read N- to C-terminus: Imidazoleglycerol-phosphate dehydratase (195 aa).

Belongs to the imidazoleglycerol-phosphate dehydratase family.

The protein resides in the cytoplasm. The enzyme catalyses D-erythro-1-(imidazol-4-yl)glycerol 3-phosphate = 3-(imidazol-4-yl)-2-oxopropyl phosphate + H2O. It participates in amino-acid biosynthesis; L-histidine biosynthesis; L-histidine from 5-phospho-alpha-D-ribose 1-diphosphate: step 6/9. This chain is Imidazoleglycerol-phosphate dehydratase, found in Jannaschia sp. (strain CCS1).